Here is a 243-residue protein sequence, read N- to C-terminus: 1-(5-phosphoribosyl)-5-[(5-phosphoribosylamino)methylideneamino] imidazole-4-carboxamide isomerase (243 aa).

Asp-10 acts as the Proton acceptor in catalysis. Residue Asp-128 is the Proton donor of the active site.

It belongs to the HisA/HisF family.

It is found in the cytoplasm. The enzyme catalyses 1-(5-phospho-beta-D-ribosyl)-5-[(5-phospho-beta-D-ribosylamino)methylideneamino]imidazole-4-carboxamide = 5-[(5-phospho-1-deoxy-D-ribulos-1-ylimino)methylamino]-1-(5-phospho-beta-D-ribosyl)imidazole-4-carboxamide. It participates in amino-acid biosynthesis; L-histidine biosynthesis; L-histidine from 5-phospho-alpha-D-ribose 1-diphosphate: step 4/9. This Helicobacter hepaticus (strain ATCC 51449 / 3B1) protein is 1-(5-phosphoribosyl)-5-[(5-phosphoribosylamino)methylideneamino] imidazole-4-carboxamide isomerase.